Consider the following 570-residue polypeptide: Adenine deaminase (570 aa).

Belongs to the metallo-dependent hydrolases superfamily. Adenine deaminase family. It depends on Mn(2+) as a cofactor.

The catalysed reaction is adenine + H2O + H(+) = hypoxanthine + NH4(+). This Oleidesulfovibrio alaskensis (strain ATCC BAA-1058 / DSM 17464 / G20) (Desulfovibrio alaskensis) protein is Adenine deaminase.